The following is a 151-amino-acid chain: Endoribonuclease YbeY (151 aa).

The Zn(2+) site is built by histidine 108, histidine 112, and aspartate 118.

This sequence belongs to the endoribonuclease YbeY family. It depends on Zn(2+) as a cofactor.

Its subcellular location is the cytoplasm. Its function is as follows. Single strand-specific metallo-endoribonuclease involved in late-stage 70S ribosome quality control and in maturation of the 3' terminus of the 16S rRNA. In Porphyromonas gingivalis (strain ATCC 33277 / DSM 20709 / CIP 103683 / JCM 12257 / NCTC 11834 / 2561), this protein is Endoribonuclease YbeY.